The sequence spans 225 residues: MMYHIPGVLSPQDVARFREQLEQAEWVDGRVTTGAQGAQVKNNQQVDTRSALYAALQNEVLNAVNQHALFFAAALPRTLSTPLFNRYQNNETYGFHVDGAVRSHPQNGWMRTDLSATLFLSDPESYDGGELVVNDTFGQHRVKLPAGDLVLYPSSSLHCVTPVTRGVRVASFMWIQSMIRDDKKRAMLFELDNNIQSLKSRYGESEEILSLLNLYHNLLREWSEI.

The 100-residue stretch at 78-177 (TLSTPLFNRY…RVASFMWIQS (100 aa)) folds into the Fe2OG dioxygenase domain. Residues histidine 96, aspartate 98, and histidine 158 each contribute to the Fe cation site. 2-oxoglutarate is bound at residue arginine 168.

Fe(2+) is required as a cofactor. L-ascorbate serves as cofactor.

The polypeptide is PKHD-type hydroxylase YbiX (Escherichia coli O45:K1 (strain S88 / ExPEC)).